The following is a 50-amino-acid chain: Parvalbumin (50 aa).

An EF-hand domain is found at 38 to 50; it reads KTHEQVKKVFNIL.

It belongs to the parvalbumin family.

Probably regulates the activity of the caudal neurosecretory system. Binds two calcium ions. The chain is Parvalbumin from Scyliorhinus canicula (Small-spotted catshark).